Here is a 130-residue protein sequence, read N- to C-terminus: Small ribosomal subunit protein uS8 (130 aa).

This sequence belongs to the universal ribosomal protein uS8 family. As to quaternary structure, part of the 30S ribosomal subunit.

In terms of biological role, one of the primary rRNA binding proteins, it binds directly to 16S rRNA central domain where it helps coordinate assembly of the platform of the 30S subunit. The chain is Small ribosomal subunit protein uS8 from Thermococcus kodakarensis (strain ATCC BAA-918 / JCM 12380 / KOD1) (Pyrococcus kodakaraensis (strain KOD1)).